The following is a 348-amino-acid chain: Rhodopsin (348 aa).

An N-acetylmethionine modification is found at methionine 1. The Extracellular segment spans residues 1–36 (MNGTEGPNFYVPFSNKTGVVRSPFEFPQYYLAEPWQ). Residues asparagine 2 and asparagine 15 are each glycosylated (N-linked (GlcNAc...) asparagine). Residues 37-61 (FSMLAAYMFLLIVLGFPINFLTLYV) form a helical membrane-spanning segment. The Cytoplasmic portion of the chain corresponds to 62–73 (TVQHKKLRTPLN). Residues 74–96 (YILLNLAVADLFMVFGGFTTTLY) form a helical membrane-spanning segment. Residues 97–110 (TSLHGYFVFGPTGC) are Extracellular-facing. The cysteines at positions 110 and 187 are disulfide-linked. Residues 111–133 (NLEGFFATLGGEIALWSLVVLAI) form a helical membrane-spanning segment. The 'Ionic lock' involved in activated form stabilization signature appears at 134–136 (ERY). Topologically, residues 134-152 (ERYVVVCKPMSNFRFGENH) are cytoplasmic. Residues 153–173 (AIMGVGFTWVMALACAAPPLV) traverse the membrane as a helical segment. Residues 174-202 (GWSRYIPEGMQCSCGIDYYTLKPEVNNES) are Extracellular-facing. Residue glutamate 201 participates in Zn(2+) binding. A helical transmembrane segment spans residues 203–224 (FVIYMFVVHFTIPMIVIFFCYG). The Cytoplasmic segment spans residues 225-252 (QLVFTVKEAAAQQQESATTQKAEKEVTR). A helical transmembrane segment spans residues 253–274 (MVIIMVIAFLICWVPYASVAFY). Topologically, residues 275 to 286 (IFTHQGSNFGPI) are extracellular. A Zn(2+)-binding site is contributed by glutamine 279. A helical transmembrane segment spans residues 287–308 (FMTLPAFFAKAASIYNPVIYIM). Lysine 296 bears the N6-(retinylidene)lysine mark. Residues 309–348 (MNKQFRTCMITTLCCGKNPLGDDEVSASASKTETSQVAPA) lie on the Cytoplasmic side of the membrane. 2 S-palmitoyl cysteine lipidation sites follow: cysteine 322 and cysteine 323. Positions 330 to 348 (DDEVSASASKTETSQVAPA) are interaction with SAG. A phosphoserine mark is found at serine 334 and serine 338. 2 positions are modified to phosphothreonine: threonine 340 and threonine 342. At serine 343 the chain carries Phosphoserine.

It belongs to the G-protein coupled receptor 1 family. Opsin subfamily. As to quaternary structure, homodimer. May form a complex composed of RHO, GRK1 and RCVRN in a Ca(2+)-dependent manner; RCVRN prevents the interaction between GRK1 and RHO. Interacts with GRK1. Interacts (phosphorylated form) with SAG. Interacts with GNAT1. Interacts with GNAT3. SAG and G-proteins compete for a common binding site. Interacts with PRCD; the interaction promotes PRCD stability. Forms a complex with ASAP1 and ARF4. Forms a complex with ASAP1, RAB11A, Rabin8/RAB3IP, ARF4 and RAB11FIP3; the complex regulates Golgi-to-cilia rhodopsin/RHO transport in photoreceptors. Phosphorylated on some or all of the serine and threonine residues present in the C-terminal region. In terms of processing, contains one covalently linked retinal chromophore. Upon light absorption, the covalently bound 11-cis-retinal is converted to all-trans-retinal. After hydrolysis of the Schiff base and release of the covalently bound all-trans-retinal, active rhodopsin is regenerated by binding of a fresh molecule of 11-cis-retinal.

The protein resides in the membrane. It is found in the cell projection. Its subcellular location is the cilium. It localises to the photoreceptor outer segment. Photoreceptor required for image-forming vision at low light intensity. Required for photoreceptor cell viability after birth. Light-induced isomerization of 11-cis to all-trans retinal triggers a conformational change that activates signaling via G-proteins. Subsequent receptor phosphorylation mediates displacement of the bound G-protein alpha subunit by the arrestin SAG and terminates signaling. This Phoca vitulina (Harbor seal) protein is Rhodopsin (RHO).